Consider the following 60-residue polypeptide: RICYNHQSTTRATTKSCEENSCYKKYWRDHRGTIIERGCGCPKVKPGVGIHCCQSDKCNY.

4 cysteine pairs are disulfide-bonded: C3–C22, C17–C39, C41–C52, and C53–C58.

The protein belongs to the three-finger toxin family. Short-chain subfamily. Type I alpha-neurotoxin sub-subfamily. In terms of tissue distribution, expressed by the venom gland.

It localises to the secreted. In terms of biological role, binds to muscle nicotinic acetylcholine receptor (nAChR) and inhibit acetylcholine from binding to the receptor, thereby impairing neuromuscular transmission. This chain is Short neurotoxin 1, found in Dendroaspis polylepis polylepis (Black mamba).